We begin with the raw amino-acid sequence, 163 residues long: ATP synthase subunit b 1 (163 aa).

The chain crosses the membrane as a helical span at residues 5-25 (LDATFFAFVGLVLFLALVVYL).

It belongs to the ATPase B chain family. In terms of assembly, F-type ATPases have 2 components, F(1) - the catalytic core - and F(0) - the membrane proton channel. F(1) has five subunits: alpha(3), beta(3), gamma(1), delta(1), epsilon(1). F(0) has three main subunits: a(1), b(2) and c(10-14). The alpha and beta chains form an alternating ring which encloses part of the gamma chain. F(1) is attached to F(0) by a central stalk formed by the gamma and epsilon chains, while a peripheral stalk is formed by the delta and b chains.

It localises to the cell inner membrane. F(1)F(0) ATP synthase produces ATP from ADP in the presence of a proton or sodium gradient. F-type ATPases consist of two structural domains, F(1) containing the extramembraneous catalytic core and F(0) containing the membrane proton channel, linked together by a central stalk and a peripheral stalk. During catalysis, ATP synthesis in the catalytic domain of F(1) is coupled via a rotary mechanism of the central stalk subunits to proton translocation. Its function is as follows. Component of the F(0) channel, it forms part of the peripheral stalk, linking F(1) to F(0). The sequence is that of ATP synthase subunit b 1 from Rhizobium etli (strain CIAT 652).